Consider the following 333-residue polypeptide: tRNA N6-adenosine threonylcarbamoyltransferase (333 aa).

Fe cation is bound by residues His-110 and His-114. Substrate is bound by residues 133–137 (IVSGG), Asp-166, Gly-179, Asp-183, and Asn-275. Asp-302 provides a ligand contact to Fe cation.

The protein belongs to the KAE1 / TsaD family. Fe(2+) is required as a cofactor.

It is found in the cytoplasm. It catalyses the reaction L-threonylcarbamoyladenylate + adenosine(37) in tRNA = N(6)-L-threonylcarbamoyladenosine(37) in tRNA + AMP + H(+). Functionally, required for the formation of a threonylcarbamoyl group on adenosine at position 37 (t(6)A37) in tRNAs that read codons beginning with adenine. Is involved in the transfer of the threonylcarbamoyl moiety of threonylcarbamoyl-AMP (TC-AMP) to the N6 group of A37, together with TsaE and TsaB. TsaD likely plays a direct catalytic role in this reaction. The sequence is that of tRNA N6-adenosine threonylcarbamoyltransferase from Thermodesulfovibrio yellowstonii (strain ATCC 51303 / DSM 11347 / YP87).